The primary structure comprises 136 residues: Protein Tat (136 aa).

The interval 22 to 37 (CTNCYCKKCCFHCPVC) is cysteine-rich. The segment at 38–48 (FTKKALGISYG) is core. Over residues 48 to 57 (GRKRRGRKSA) the composition is skewed to basic residues. The disordered stretch occupies residues 48–136 (GRKRRGRKSA…SGSSGSACKH (89 aa)). Positions 49 to 55 (RKRRGRK) match the Nuclear localization signal, and RNA-binding (TAR) motif. Polar residues predominate over residues 58–73 (VHSTNNQDPVRQQSLP). The span at 104-120 (SSVSSGRTSGTSSSGYT) shows a compositional bias: low complexity. Polar residues predominate over residues 123–136 (FKTSSGSSGSACKH).

The protein belongs to the lentiviruses Tat family. Interacts with host CCNT1. Associates with the P-TEFb complex composed at least of Tat, P-TEFb (CDK9 and CCNT1), TAR RNA, RNA Pol II. Interacts with CCNT2; the resulting complex is unable to bind to TAR RNA.

The protein resides in the host nucleus. Its subcellular location is the host nucleolus. In terms of biological role, transcriptional activator that increases RNA Pol II processivity, thereby increasing the level of full-length viral transcripts. Recognizes a hairpin structure at the 5'-LTR of the nascent viral mRNAs referred to as the transactivation responsive RNA element (TAR) and recruits the cyclin T1-CDK9 complex (P-TEFb complex) that will in turn hyperphosphorylate the RNA polymerase II to allow efficient elongation. The CDK9 component of P-TEFb and other Tat-activated kinases hyperphosphorylate the C-terminus of RNA Pol II that becomes stabilized and much more processive. Functionally, extracellular circulating Tat can be endocytosed by surrounding uninfected cells via the binding to several surface receptors. Endosomal low pH allows Tat to cross the endosome membrane to enter the cytosol and eventually further translocate into the nucleus, thereby inducing severe cell dysfunctions ranging from cell activation to cell death. Through. The chain is Protein Tat from Simian immunodeficiency virus (isolate TAN1) (SIV-cpz).